A 137-amino-acid chain; its full sequence is Acidic phospholipase A2 Vur-PL3 (137 aa).

The signal sequence occupies residues 1-16 (MRTLWIVAVCLIGVEG). 7 disulfides stabilise this stretch: C42-C131, C44-C60, C59-C111, C65-C137, C66-C104, C73-C97, and C91-C102. Ca(2+) is bound by residues Y43, G45, and G47. H63 is an active-site residue. D64 is a binding site for Ca(2+). D105 is an active-site residue.

The cofactor is Ca(2+). In terms of tissue distribution, expressed by the venom gland.

Its subcellular location is the secreted. The enzyme catalyses a 1,2-diacyl-sn-glycero-3-phosphocholine + H2O = a 1-acyl-sn-glycero-3-phosphocholine + a fatty acid + H(+). This is Acidic phospholipase A2 Vur-PL3 from Vipera renardi (Steppe viper).